A 346-amino-acid chain; its full sequence is DNA-directed RNA polymerases I and III subunit RPAC1 (346 aa).

Position 2 is an N-acetylalanine (Ala2). Ser4 bears the Phosphoserine mark.

The protein belongs to the archaeal Rpo3/eukaryotic RPB3 RNA polymerase subunit family. In terms of assembly, component of the RNA polymerase I and RNA polymerase III complexes consisting of at least 13 and 17 subunits, respectively. Pol I complex consists of a ten-subunit catalytic core composed of POLR1A/RPA1, POLR1B/RPA2, POLR1C/RPAC1, POLR1D/RPAC2, POLR1H/RPA12, POLR2E/RPABC1, POLR2F/RPABC2, POLR2H/RPABC3, POLR2K/RPABC4 and POLR2L/RPABC5; a mobile stalk subunit POLR1F/RPA43 protruding from the core and additional subunits homologous to general transcription factors POLR1E/RPA49 and POLR1G/RPA34. Part of Pol I pre-initiation complex (PIC), in which Pol I core assembles with RRN3 and promoter-bound UTBF and SL1/TIF-IB complex. Pol III complex consists of a ten-subunit catalytic core composed of POLR3A/RPC1, POLR3B/RPC2, POLR1C/RPAC1, POLR1D/RPAC2, POLR3K/RPC10, POLR2E/RPABC1, POLR2F/RPABC2, POLR2H/RPABC3, POLR2K/RPABC4 and POLR2L/RPABC5; a mobile stalk composed of two subunits POLR3H/RPC8 and CRCP/RPC9, protruding from the core and functioning primarily in transcription initiation; and additional subunits homologous to general transcription factors of the RNA polymerase II machinery, POLR3C/RPC3-POLR3F/RPC6-POLR3G/RPC7 heterotrimer required for transcription initiation and POLR3D/RPC4-POLR3E/RPC5 heterodimer involved in both transcription initiation and termination.

The protein localises to the nucleus. The protein resides in the nucleolus. It localises to the cytoplasm. It is found in the cytosol. Functionally, DNA-dependent RNA polymerase catalyzes the transcription of DNA into RNA using the four ribonucleoside triphosphates as substrates. Common component of RNA polymerases I and III which synthesize ribosomal RNA precursors and short non-coding RNAs including 5S rRNA, snRNAs, tRNAs and miRNAs, respectively. POLR1C/RPAC1 is part of the polymerase core and may function as a clamp element that moves to open and close the cleft. This Homo sapiens (Human) protein is DNA-directed RNA polymerases I and III subunit RPAC1.